The chain runs to 238 residues: Anti-sigma-K factor RskA (238 aa).

The Cytoplasmic segment spans residues 1 to 97; the sequence is MTSPQNDLLS…RSSSRRRAAA (97 aa). The chain crosses the membrane as a helical span at residues 98-118; sequence VLSAAAAVVIGLGTLAVGYAL. The Extracellular portion of the chain corresponds to 119–238; that stretch reads RPAPTPSTAE…TPVFAELPLT (120 aa).

This sequence belongs to the anti-sigma-K factor family.

The protein localises to the cell membrane. Functionally, an anti-sigma factor for extracytoplasmic function (ECF) sigma factor SigK. ECF sigma factors are held in an inactive form by an anti-sigma factor until released by regulated intramembrane proteolysis (RIP). RIP occurs when an extracytoplasmic signal triggers a concerted proteolytic cascade to transmit information and elicit cellular responses. The membrane-spanning regulatory substrate protein is first cut extracytoplasmically (site-1 protease, S1P), then within the membrane itself (site-2 protease, S2P, Rip1), while cytoplasmic proteases finish degrading the regulatory protein, liberating the sigma factor. The protein is Anti-sigma-K factor RskA (rskA) of Mycolicibacterium vanbaalenii (strain DSM 7251 / JCM 13017 / BCRC 16820 / KCTC 9966 / NRRL B-24157 / PYR-1) (Mycobacterium vanbaalenii).